The primary structure comprises 1488 residues: Chromosome partition protein MukB (1488 aa).

Position 34 to 41 (34 to 41 (GGNGAGKS)) interacts with ATP. Coiled coils occupy residues 326–418 (LEAD…QYNQ), 444–472 (LDTFQAKEQEATEKLLSLEQKMSVAQTAH), and 509–602 (RHLA…RRAP). The segment at 666 to 783 (PGGAEDQRLN…SLPIFGRAAR (118 aa)) is flexible hinge. Coiled coils occupy residues 835 to 923 (EAEI…AKLE), 977 to 1116 (EMLS…AKAG), and 1209 to 1265 (VEAI…LQSV). Positions 1049-1074 (ADSGAEERARQRRDELHAQLSNNRSR) are disordered. A compositionally biased stretch (basic and acidic residues) spans 1051 to 1065 (SGAEERARQRRDELH).

This sequence belongs to the SMC family. MukB subfamily. In terms of assembly, homodimerization via its hinge domain. Binds to DNA via its C-terminal region. Interacts, and probably forms a ternary complex, with MukE and MukF via its C-terminal region. The complex formation is stimulated by calcium or magnesium. Interacts with tubulin-related protein FtsZ.

Its subcellular location is the cytoplasm. It is found in the nucleoid. In terms of biological role, plays a central role in chromosome condensation, segregation and cell cycle progression. Functions as a homodimer, which is essential for chromosome partition. Involved in negative DNA supercoiling in vivo, and by this means organize and compact chromosomes. May achieve or facilitate chromosome segregation by condensation DNA from both sides of a centrally located replisome during cell division. The protein is Chromosome partition protein MukB of Salmonella heidelberg (strain SL476).